Consider the following 604-residue polypeptide: Prostaglandin G/H synthase 2 (604 aa).

An N-terminal signal peptide occupies residues 1–17 (MLARALLLCAALALGQA). Residues 18–55 (ANPCCSNPCQNRGECLSVGFDRYKCDCTRTGYYGENCT) enclose the EGF-like domain. Intrachain disulfides connect C21/C32, C22/C145, C26/C42, and C44/C54. A glycan (N-linked (GlcNAc...) asparagine) is linked at N53. R106 contributes to the substrate binding site. N-linked (GlcNAc...) asparagine glycosylation is present at N130. Catalysis depends on H193, which acts as the Proton acceptor. Y341 provides a ligand contact to substrate. The active-site For cyclooxygenase activity is the Y371. Residue H374 participates in heme b binding. N396 is a glycosylation site (N-linked (GlcNAc...) asparagine). S-nitrosocysteine is present on C526. Residues C555 and C561 are joined by a disulfide bond. A glycan (N-linked (GlcNAc...) asparagine) is linked at N580.

The protein belongs to the prostaglandin G/H synthase family. In terms of assembly, homodimer. Heme b is required as a cofactor. Post-translationally, S-nitrosylation by NOS2 (iNOS) activates enzyme activity. S-nitrosylation may take place on different Cys residues in addition to Cys-526.

The protein localises to the microsome membrane. The protein resides in the endoplasmic reticulum membrane. It is found in the nucleus inner membrane. Its subcellular location is the nucleus outer membrane. It carries out the reaction (5Z,8Z,11Z,14Z)-eicosatetraenoate + AH2 + 2 O2 = prostaglandin H2 + A + H2O. The enzyme catalyses (5Z,8Z,11Z,14Z)-eicosatetraenoate + 2 O2 = prostaglandin G2. It catalyses the reaction prostaglandin G2 + AH2 = prostaglandin H2 + A + H2O. The catalysed reaction is (5Z,8Z,11Z,14Z,17Z)-eicosapentaenoate + 2 O2 = prostaglandin G3. It carries out the reaction prostaglandin G3 + AH2 = prostaglandin H3 + A + H2O. The enzyme catalyses (8Z,11Z,14Z)-eicosatrienoate + 2 O2 = prostaglandin G1. It catalyses the reaction prostaglandin G1 + AH2 = prostaglandin H1 + A + H2O. The catalysed reaction is 2-(5Z,8Z,11Z,14Z)-eicosatetraenoyl-sn-glycero-3-phosphoethanolamine + 2 O2 = 2-(prostaglandin G2)-sn-glycero-3-phosphoethanolamine. It carries out the reaction 2-(prostaglandin G2)-sn-glycero-3-phosphoethanolamine + AH2 = 2-(prostaglandin H2)-sn-glycero-3-phosphoethanolamine + A + H2O. The enzyme catalyses 2-(5Z,8Z,11Z,14Z)-eicosatetraenoyl-sn-glycero-3-phosphocholine + 2 O2 = 2-(prostaglandin G2)-sn-glycero-3-phosphocholine. It catalyses the reaction 2-(prostaglandin G2)-sn-glycero-3-phosphocholine + AH2 = 2-(prostaglandin H2)-sn-glycero-3-phosphocholine + A + H2O. The catalysed reaction is (15S)-hydroperoxy-(5Z,8Z,11Z,13E)-eicosatetraenoate + AH2 = (15S)-hydroxy-(5Z,8Z,11Z,13E)-eicosatetraenoate + A + H2O. It carries out the reaction 2-(5Z,8Z,11Z,14Z)-eicosatetraenoyl-sn-glycero-3-phosphocholine + AH2 + O2 = 2-[(15S)-hydroxy-(5Z,8Z,11Z,13E)-eicosatetraenoyl]-sn-glycero-3-phosphocholine + A + H2O. The enzyme catalyses 2-(5Z,8Z,11Z,14Z)-eicosatetraenoyl-sn-glycero-3-phosphocholine + AH2 + O2 = 2-[(15R)-hydroxy-(5Z,8Z,11Z,13E)-eicosatetraenoyl]-sn-glycero-3-phosphocholine + A + H2O. It catalyses the reaction 2-(5Z,8Z,11Z,14Z)-eicosatetraenoyl-sn-glycero-3-phosphocholine + AH2 + O2 = 2-[(11R)-hydroxy-(5Z,8Z,12E,14Z)-eicosatetraenoyl]-sn-glycero-3-phosphocholine + A + H2O. The catalysed reaction is (9Z,12Z)-octadecadienoate + AH2 + O2 = 9-hydroxy-(10E,12Z)-octadecadienoate + A + H2O. It carries out the reaction (9Z,12Z)-octadecadienoate + AH2 + O2 = 13-hydroxy-(9Z,11E)-octadecadienoate + A + H2O. The enzyme catalyses (5Z,8Z,11Z,14Z)-eicosatetraenoate + AH2 + O2 = (15R)-hydroxy-(5Z,8Z,11Z,13E)-eicosatetraenoate + A + H2O. It catalyses the reaction (5Z,8Z,11Z,14Z)-eicosatetraenoate + AH2 + O2 = (11R)-hydroxy-(5Z,8Z,12E,14Z)-eicosatetraenoate + A + H2O. The catalysed reaction is (5Z,8Z,11Z,14Z,17Z)-eicosapentaenoate + AH2 + O2 = (11R)-hydroxy-(5Z,8Z,12E,14Z,17Z)-eicosapentaenoate + A + H2O. It carries out the reaction (5Z,8Z,11Z,14Z,17Z)-eicosapentaenoate + AH2 + O2 = (18S)-hydroxy-(5Z,8Z,11Z,14Z,16E)-eicosapentaenoate + A + H2O. The enzyme catalyses (5Z,8Z,11Z,14Z,17Z)-eicosapentaenoate + AH2 + O2 = (18R)-hydroxy-(5Z,8Z,11Z,14Z,16E)-eicosapentaenoate + A + H2O. It catalyses the reaction (5Z,8Z,11Z,14Z,17Z)-eicosapentaenoate + AH2 + O2 = (15R)-hydroxy-(5Z,8Z,11Z,13E,17Z)-eicosapentaenoate + A + H2O. The catalysed reaction is (5Z,8Z,11Z,14Z,17Z)-eicosapentaenoate + AH2 + O2 = (15S)-hydroxy-(5Z,8Z,11Z,13E,17Z)-eicosapentaenoate + A + H2O. It carries out the reaction (7Z,10Z,13Z,16Z,19Z)-docosapentaenoate + AH2 + O2 = 13R-hydroxy-(7Z,10Z,14E,16Z,19Z)-docosapentaenoate + A + H2O. The enzyme catalyses (4Z,7Z,10Z,13Z,16Z,19Z)-docosahexaenoate + AH2 + O2 = 13-hydroxy-(4Z,7Z,10Z,14E,16Z,19Z)-docosahexaenoate + A + H2O. It catalyses the reaction (5S)-hydroxy-(6E,8Z,11Z,14Z)-eicosatetraenoate + AH2 + O2 = (5S,15R)-dihydroxy-(6E,8Z,11Z,13E)-eicosatetraenoate + A + H2O. The catalysed reaction is (4Z,7Z,10Z,13Z,16Z,19Z)-docosahexaenoate + AH2 + O2 = 17R-hydroxy-(4Z,7Z,10Z,13Z,15E,19Z)-docosahexaenoate + A + H2O. It carries out the reaction (5S)-hydroxy-(6E,8Z,11Z,14Z)-eicosatetraenoate + AH2 + O2 = (5S,15S)-dihydroxy-(6E,8Z,11Z,13E)-eicosatetraenoate + A + H2O. The enzyme catalyses (5S)-hydroxy-(6E,8Z,11Z,14Z)-eicosatetraenoate + AH2 + O2 = (5S,11R)-dihydroxy-(6E,8Z,12E,14Z)-eicosatetraenoate + A + H2O. It catalyses the reaction 2-(5Z,8Z,11Z,14Z-eicosatetraenoyl)-glycerol + 2 O2 = 2-glyceryl-prostaglandin G2. The catalysed reaction is 2-glyceryl-prostaglandin G2 + AH2 = 2-glyceryl-prostaglandin H2 + A + H2O. It carries out the reaction (5Z,8Z,11Z,14Z)-eicosatetraenoate + O2 = (15R)-hydroperoxy-(5Z,8Z,11Z,13E)-eicosatetraenoate. The enzyme catalyses (5Z,8Z,11Z,14Z)-eicosatetraenoate + O2 = 11R-hydroperoxy-(5Z,8Z,12E,14Z)-eicosatetraenoate. It catalyses the reaction (9Z,12Z)-octadecadienoate + AH2 + O2 = (9R)-hydroxy-(10E,12Z)-octadecadienoate + A + H2O. The catalysed reaction is (9Z,12Z)-octadecadienoate + AH2 + O2 = (9S)-hydroxy-(10E,12Z)-octadecadienoate + A + H2O. It carries out the reaction (9Z,12Z)-octadecadienoate + AH2 + O2 = (13S)-hydroxy-(9Z,11E)-octadecadienoate + A + H2O. The enzyme catalyses (9Z,12Z)-octadecadienoate + AH2 + O2 = (13R)-hydroxy-(9Z,11E)-octadecadienoate + A + H2O. It participates in lipid metabolism; prostaglandin biosynthesis. In terms of biological role, dual cyclooxygenase and peroxidase in the biosynthesis pathway of prostanoids, a class of C20 oxylipins mainly derived from arachidonate ((5Z,8Z,11Z,14Z)-eicosatetraenoate, AA, C20:4(n-6)), with a particular role in the inflammatory response. The cyclooxygenase activity oxygenates AA to the hydroperoxy endoperoxide prostaglandin G2 (PGG2), and the peroxidase activity reduces PGG2 to the hydroxy endoperoxide prostaglandin H2 (PGH2), the precursor of all 2-series prostaglandins and thromboxanes. This complex transformation is initiated by abstraction of hydrogen at carbon 13 (with S-stereochemistry), followed by insertion of molecular O2 to form the endoperoxide bridge between carbon 9 and 11 that defines prostaglandins. The insertion of a second molecule of O2 (bis-oxygenase activity) yields a hydroperoxy group in PGG2 that is then reduced to PGH2 by two electrons. Similarly catalyzes successive cyclooxygenation and peroxidation of dihomo-gamma-linoleate (DGLA, C20:3(n-6)) and eicosapentaenoate (EPA, C20:5(n-3)) to corresponding PGH1 and PGH3, the precursors of 1- and 3-series prostaglandins. In an alternative pathway of prostanoid biosynthesis, converts 2-arachidonoyl lysophopholipids to prostanoid lysophopholipids, which are then hydrolyzed by intracellular phospholipases to release free prostanoids. Metabolizes 2-arachidonoyl glycerol yielding the glyceryl ester of PGH2, a process that can contribute to pain response. Generates lipid mediators from n-3 and n-6 polyunsaturated fatty acids (PUFAs) via a lipoxygenase-type mechanism. Oxygenates PUFAs to hydroperoxy compounds and then reduces them to corresponding alcohols. Plays a role in the generation of resolution phase interaction products (resolvins) during both sterile and infectious inflammation. Metabolizes docosahexaenoate (DHA, C22:6(n-3)) to 17R-HDHA, a precursor of the D-series resolvins (RvDs). As a component of the biosynthetic pathway of E-series resolvins (RvEs), converts eicosapentaenoate (EPA, C20:5(n-3)) primarily to 18S-HEPE that is further metabolized by ALOX5 and LTA4H to generate 18S-RvE1 and 18S-RvE2. In vascular endothelial cells, converts docosapentaenoate (DPA, C22:5(n-3)) to 13R-HDPA, a precursor for 13-series resolvins (RvTs) shown to activate macrophage phagocytosis during bacterial infection. In activated leukocytes, contributes to oxygenation of hydroxyeicosatetraenoates (HETE) to diHETES (5,15-diHETE and 5,11-diHETE). Can also use linoleate (LA, (9Z,12Z)-octadecadienoate, C18:2(n-6)) as substrate and produce hydroxyoctadecadienoates (HODEs) in a regio- and stereospecific manner, being (9R)-HODE ((9R)-hydroxy-(10E,12Z)-octadecadienoate) and (13S)-HODE ((13S)-hydroxy-(9Z,11E)-octadecadienoate) its major products. During neuroinflammation, plays a role in neuronal secretion of specialized preresolving mediators (SPMs) 15R-lipoxin A4 that regulates phagocytic microglia. The chain is Prostaglandin G/H synthase 2 (PTGS2) from Cavia porcellus (Guinea pig).